Reading from the N-terminus, the 212-residue chain is Large ribosomal subunit protein uL4 (212 aa).

The protein belongs to the universal ribosomal protein uL4 family. Part of the 50S ribosomal subunit.

One of the primary rRNA binding proteins, this protein initially binds near the 5'-end of the 23S rRNA. It is important during the early stages of 50S assembly. It makes multiple contacts with different domains of the 23S rRNA in the assembled 50S subunit and ribosome. In terms of biological role, forms part of the polypeptide exit tunnel. The chain is Large ribosomal subunit protein uL4 from Caulobacter sp. (strain K31).